Consider the following 52-residue polypeptide: Conotoxin Cal6.25 (52 aa).

A signal peptide spans 1-22; the sequence is MKLTHVLIVAVLVLTVCHLTMA. 3 disulfide bridges follow: C24-C41, C31-C45, and C40-C50.

As to expression, expressed by the venom duct.

It localises to the secreted. Its function is as follows. Probable neurotoxin. In Californiconus californicus (California cone), this protein is Conotoxin Cal6.25.